Consider the following 667-residue polypeptide: DNA damage checkpoint protein LCD1 (667 aa).

Positions 28–55 (KEEFDKEIQKLRQQLQSLEDEKKFLVLE) form a coiled coil.

In terms of assembly, forms a complex with MEC1.

The protein resides in the cytoplasm. It is found in the nucleus. In terms of biological role, forms a complex with the serine/threonine kinase MEC1 which activates checkpoint signaling upon genotoxic stresses. The MEC1-LCD1 complex is recruited to DNA lesions in order to initiates the DNA repair by homologous recombination. Required for cell growth and meiotic recombination. This is DNA damage checkpoint protein LCD1 (LCD1) from Candida glabrata (strain ATCC 2001 / BCRC 20586 / JCM 3761 / NBRC 0622 / NRRL Y-65 / CBS 138) (Yeast).